A 502-amino-acid chain; its full sequence is ATP synthase subunit alpha (502 aa).

169–176 (GDRQTGKT) contacts ATP.

Belongs to the ATPase alpha/beta chains family. F-type ATPases have 2 components, CF(1) - the catalytic core - and CF(0) - the membrane proton channel. CF(1) has five subunits: alpha(3), beta(3), gamma(1), delta(1), epsilon(1). CF(0) has three main subunits: a(1), b(2) and c(9-12). The alpha and beta chains form an alternating ring which encloses part of the gamma chain. CF(1) is attached to CF(0) by a central stalk formed by the gamma and epsilon chains, while a peripheral stalk is formed by the delta and b chains.

The protein resides in the cell inner membrane. The catalysed reaction is ATP + H2O + 4 H(+)(in) = ADP + phosphate + 5 H(+)(out). Produces ATP from ADP in the presence of a proton gradient across the membrane. The alpha chain is a regulatory subunit. The protein is ATP synthase subunit alpha of Pelobacter propionicus (strain DSM 2379 / NBRC 103807 / OttBd1).